Reading from the N-terminus, the 668-residue chain is Fructose-1,6-bisphosphatase class 3 (668 aa).

It belongs to the FBPase class 3 family. Mn(2+) is required as a cofactor.

The enzyme catalyses beta-D-fructose 1,6-bisphosphate + H2O = beta-D-fructose 6-phosphate + phosphate. It functions in the pathway carbohydrate biosynthesis; gluconeogenesis. The chain is Fructose-1,6-bisphosphatase class 3 from Clostridium botulinum (strain ATCC 19397 / Type A).